The primary structure comprises 119 residues: Large ribosomal subunit protein bL20 (119 aa).

This sequence belongs to the bacterial ribosomal protein bL20 family.

Binds directly to 23S ribosomal RNA and is necessary for the in vitro assembly process of the 50S ribosomal subunit. It is not involved in the protein synthesizing functions of that subunit. This is Large ribosomal subunit protein bL20 (rplT) from Geobacillus stearothermophilus (Bacillus stearothermophilus).